Reading from the N-terminus, the 174-residue chain is Glutamyl-tRNA(Gln) amidotransferase subunit F, mitochondrial (174 aa).

It belongs to the GatF family. As to quaternary structure, subunit of the heterotrimeric GatFAB amidotransferase (AdT) complex, composed of A, B and F subunits.

The protein resides in the mitochondrion inner membrane. The enzyme catalyses L-glutamyl-tRNA(Gln) + L-glutamine + ATP + H2O = L-glutaminyl-tRNA(Gln) + L-glutamate + ADP + phosphate + H(+). Its function is as follows. Allows the formation of correctly charged Gln-tRNA(Gln) through the transamidation of misacylated Glu-tRNA(Gln) in the mitochondria. The reaction takes place in the presence of glutamine and ATP through an activated gamma-phospho-Glu-tRNA(Gln). Required for proper protein synthesis within the mitochondrion. In Kluyveromyces lactis (strain ATCC 8585 / CBS 2359 / DSM 70799 / NBRC 1267 / NRRL Y-1140 / WM37) (Yeast), this protein is Glutamyl-tRNA(Gln) amidotransferase subunit F, mitochondrial.